A 111-amino-acid chain; its full sequence is Cytochrome c (111 aa).

The residue at position 1 (alanine 1) is an N-acetylalanine. Heme c contacts are provided by cysteine 22, cysteine 25, and histidine 26. Lysine 80 is modified (N6,N6,N6-trimethyllysine). Methionine 88 lines the heme c pocket. Lysine 94 carries the N6,N6,N6-trimethyllysine modification.

The protein belongs to the cytochrome c family. Post-translationally, binds 1 heme c group covalently per subunit.

The protein localises to the mitochondrion intermembrane space. Functionally, electron carrier protein. The oxidized form of the cytochrome c heme group can accept an electron from the heme group of the cytochrome c1 subunit of cytochrome reductase. Cytochrome c then transfers this electron to the cytochrome oxidase complex, the final protein carrier in the mitochondrial electron-transport chain. The polypeptide is Cytochrome c (Vigna radiata var. radiata (Mung bean)).